Here is a 262-residue protein sequence, read N- to C-terminus: Type III pantothenate kinase (262 aa).

9–16 contacts ATP; sequence DIGNTNIV. Substrate-binding positions include Y103 and 110 to 113; that span reads GVDR. The Proton acceptor role is filled by D112. D132 is a binding site for K(+). T135 provides a ligand contact to ATP. A substrate-binding site is contributed by T187.

This sequence belongs to the type III pantothenate kinase family. In terms of assembly, homodimer. Requires NH4(+) as cofactor. K(+) is required as a cofactor.

The protein resides in the cytoplasm. The catalysed reaction is (R)-pantothenate + ATP = (R)-4'-phosphopantothenate + ADP + H(+). It functions in the pathway cofactor biosynthesis; coenzyme A biosynthesis; CoA from (R)-pantothenate: step 1/5. Functionally, catalyzes the phosphorylation of pantothenate (Pan), the first step in CoA biosynthesis. The protein is Type III pantothenate kinase of Finegoldia magna (strain ATCC 29328 / DSM 20472 / WAL 2508) (Peptostreptococcus magnus).